Reading from the N-terminus, the 303-residue chain is Cyclin-dependent kinase B1-1 (303 aa).

Residues 4–295 form the Protein kinase domain; sequence YEKLEKVGEG…AKAAMEHPYF (292 aa). Residues 10-18 and lysine 33 contribute to the ATP site; that span reads VGEGTYGKV. Position 14 is a phosphothreonine (threonine 14). Tyrosine 15 is subject to Phosphotyrosine. The Proton acceptor role is filled by aspartate 136. The residue at position 170 (threonine 170) is a Phosphothreonine.

This sequence belongs to the protein kinase superfamily. CMGC Ser/Thr protein kinase family. CDC2/CDKX subfamily. Expressed in actively dividing cells: root and shoot apical meristems, and young leaves.

It catalyses the reaction L-seryl-[protein] + ATP = O-phospho-L-seryl-[protein] + ADP + H(+). The catalysed reaction is L-threonyl-[protein] + ATP = O-phospho-L-threonyl-[protein] + ADP + H(+). It carries out the reaction [DNA-directed RNA polymerase] + ATP = phospho-[DNA-directed RNA polymerase] + ADP + H(+). This chain is Cyclin-dependent kinase B1-1 (CDKB1-1), found in Oryza sativa subsp. japonica (Rice).